The sequence spans 82 residues: ATP synthase subunit c, chloroplastic (82 aa).

Helical transmembrane passes span 4-24 (IISA…AIGP) and 57-77 (LAFM…LLFA).

Belongs to the ATPase C chain family. As to quaternary structure, F-type ATPases have 2 components, F(1) - the catalytic core - and F(0) - the membrane proton channel. F(1) has five subunits: alpha(3), beta(3), gamma(1), delta(1), epsilon(1). F(0) has four main subunits: a(1), b(1), b'(1) and c(10-14). The alpha and beta chains form an alternating ring which encloses part of the gamma chain. F(1) is attached to F(0) by a central stalk formed by the gamma and epsilon chains, while a peripheral stalk is formed by the delta, b and b' chains.

Its subcellular location is the plastid. The protein resides in the chloroplast thylakoid membrane. Its function is as follows. F(1)F(0) ATP synthase produces ATP from ADP in the presence of a proton or sodium gradient. F-type ATPases consist of two structural domains, F(1) containing the extramembraneous catalytic core and F(0) containing the membrane proton channel, linked together by a central stalk and a peripheral stalk. During catalysis, ATP synthesis in the catalytic domain of F(1) is coupled via a rotary mechanism of the central stalk subunits to proton translocation. In terms of biological role, key component of the F(0) channel; it plays a direct role in translocation across the membrane. A homomeric c-ring of between 10-14 subunits forms the central stalk rotor element with the F(1) delta and epsilon subunits. This is ATP synthase subunit c, chloroplastic from Thalassiosira pseudonana (Marine diatom).